Reading from the N-terminus, the 362-residue chain is Aspartate-semialdehyde dehydrogenase (362 aa).

Positions 15, 16, 17, 18, 40, 43, 87, and 88 each coordinate NADP(+). The active-site Acyl-thioester intermediate is the cysteine 154. Glycine 186 contacts NADP(+). The active-site Proton acceptor is the histidine 251. Asparagine 340 lines the NADP(+) pocket.

It belongs to the aspartate-semialdehyde dehydrogenase family. Homotetramer; dimer of dimers.

Its subcellular location is the cytoplasm. The protein resides in the cytosol. It localises to the nucleus. It catalyses the reaction L-aspartate 4-semialdehyde + phosphate + NADP(+) = 4-phospho-L-aspartate + NADPH + H(+). It functions in the pathway amino-acid biosynthesis; L-methionine biosynthesis via de novo pathway; L-homoserine from L-aspartate: step 2/3. Its pathway is amino-acid biosynthesis; L-threonine biosynthesis; L-threonine from L-aspartate: step 2/5. Its function is as follows. Catalyzes the NADPH-dependent formation of L-aspartate 4-semialdehyde (L-ASA) by the reductive dephosphorylation of 4-phospho-L-aspartate. Mediates the second step in the biosynthesis of amino acids that derive from aspartate (the aspartate family of amino acids), including methioinine and threonine, the latter of which is a precursor to isoleucine. The protein is Aspartate-semialdehyde dehydrogenase of Trichophyton rubrum (strain ATCC MYA-4607 / CBS 118892) (Athlete's foot fungus).